The sequence spans 89 residues: Prostaglandin E2 receptor EP3 subtype (89 aa).

A helical transmembrane segment spans residues 1–18 (GVWLAVLAFALLPVLGVG). At 19–48 (QYTIQWPGTWCFISTGPGGNGTNSRQNWGN) the chain is on the extracellular side. Residue Asn-38 is glycosylated (N-linked (GlcNAc...) asparagine). The helical transmembrane segment at 49-74 (VFFASDFAILGLSALVVTFACNLATI) threads the bilayer. The Cytoplasmic segment spans residues 75-89 (KALVSRCRAKATASQ).

Belongs to the G-protein coupled receptor 1 family. Interacts (via C-terminus) with MKLN1.

The protein resides in the cell membrane. Receptor for prostaglandin E2 (PGE2). Required for normal development of fever in response to pyrinogens, including IL1B, prostaglandin E2 and bacterial lipopolysaccharide (LPS). Required for normal potentiation of platelet aggregation by prostaglandin E2, and thus plays a role in the regulation of blood coagulation. Required for increased HCO3(-) secretion in the duodenum in response to mucosal acidification, and thereby contributes to the protection of the mucosa against acid-induced ulceration. Not required for normal kidney function, normal urine volume and osmolality. In Ovis aries (Sheep), this protein is Prostaglandin E2 receptor EP3 subtype (PTGER3).